A 290-amino-acid polypeptide reads, in one-letter code: Glycine--tRNA ligase alpha subunit (290 aa).

Belongs to the class-II aminoacyl-tRNA synthetase family. As to quaternary structure, tetramer of two alpha and two beta subunits.

The protein localises to the cytoplasm. The catalysed reaction is tRNA(Gly) + glycine + ATP = glycyl-tRNA(Gly) + AMP + diphosphate. The polypeptide is Glycine--tRNA ligase alpha subunit (Prochlorococcus marinus (strain NATL1A)).